The sequence spans 155 residues: 6,7-dimethyl-8-ribityllumazine synthase (155 aa).

Residues W23, 57 to 59 (AWE), and 81 to 83 (CVI) contribute to the 5-amino-6-(D-ribitylamino)uracil site. 86–87 (DT) contributes to the (2S)-2-hydroxy-3-oxobutyl phosphate binding site. H89 serves as the catalytic Proton donor. N114 lines the 5-amino-6-(D-ribitylamino)uracil pocket. R128 contributes to the (2S)-2-hydroxy-3-oxobutyl phosphate binding site.

It belongs to the DMRL synthase family. Forms an icosahedral capsid composed of 60 subunits, arranged as a dodecamer of pentamers.

It carries out the reaction (2S)-2-hydroxy-3-oxobutyl phosphate + 5-amino-6-(D-ribitylamino)uracil = 6,7-dimethyl-8-(1-D-ribityl)lumazine + phosphate + 2 H2O + H(+). The protein operates within cofactor biosynthesis; riboflavin biosynthesis; riboflavin from 2-hydroxy-3-oxobutyl phosphate and 5-amino-6-(D-ribitylamino)uracil: step 1/2. Functionally, catalyzes the formation of 6,7-dimethyl-8-ribityllumazine by condensation of 5-amino-6-(D-ribitylamino)uracil with 3,4-dihydroxy-2-butanone 4-phosphate. This is the penultimate step in the biosynthesis of riboflavin. The protein is 6,7-dimethyl-8-ribityllumazine synthase of Stenotrophomonas maltophilia (strain R551-3).